A 453-amino-acid chain; its full sequence is Aspartate aminotransferase, chloroplastic (453 aa).

The transit peptide at 1 to 44 (MASLMLSLGSTSLLPREINKDKLKLGTSASNPFLKAKSFSRVTM) directs the protein to the chloroplast. Glycine 85, tryptophan 181, and asparagine 234 together coordinate L-aspartate. N6-(pyridoxal phosphate)lysine is present on lysine 298. Arginine 427 provides a ligand contact to L-aspartate.

It belongs to the class-I pyridoxal-phosphate-dependent aminotransferase family. Homodimer. It depends on pyridoxal 5'-phosphate as a cofactor.

It localises to the plastid. The protein localises to the chloroplast. Its subcellular location is the amyloplast. The enzyme catalyses L-aspartate + 2-oxoglutarate = oxaloacetate + L-glutamate. In terms of biological role, amino acid aminotransferase important for the metabolism of amino acids and Krebs-cycle related organic acids. No activity with D-Asp or D-Ala as amino donors. In plants, it is involved in nitrogen metabolism and in aspects of carbon and energy metabolism. This Arabidopsis thaliana (Mouse-ear cress) protein is Aspartate aminotransferase, chloroplastic (ASP5).